Here is a 233-residue protein sequence, read N- to C-terminus: MADS-box transcription factor 56 (233 aa).

The 61-residue stretch at 1–61 folds into the MADS-box domain; the sequence is MVRGRTELKR…GRLYEFASAP (61 aa). Positions 87–177 constitute a K-box domain; it reads IQQVKDDTLG…RGKHRNLEAA (91 aa).

The protein localises to the nucleus. Its function is as follows. Probable transcription factor. This chain is MADS-box transcription factor 56 (MADS56), found in Oryza sativa subsp. indica (Rice).